Reading from the N-terminus, the 365-residue chain is GTPase Obg (365 aa).

An Obg domain is found at Met1–Ile177. Positions Gln64 to Leu85 are disordered. One can recognise an OBG-type G domain in the interval Ala178–Glu348. Residues Gly184 to Ser191, Phe209 to Lys213, Asp231 to Gly234, Asn300 to Asp303, and Ser329 to Leu331 each bind GTP. Mg(2+)-binding residues include Ser191 and Thr211.

It belongs to the TRAFAC class OBG-HflX-like GTPase superfamily. OBG GTPase family. As to quaternary structure, monomer. The cofactor is Mg(2+).

It localises to the cytoplasm. In terms of biological role, an essential GTPase which binds GTP, GDP and possibly (p)ppGpp with moderate affinity, with high nucleotide exchange rates and a fairly low GTP hydrolysis rate. Plays a role in control of the cell cycle, stress response, ribosome biogenesis and in those bacteria that undergo differentiation, in morphogenesis control. This is GTPase Obg from Methylacidiphilum infernorum (isolate V4) (Methylokorus infernorum (strain V4)).